The following is a 226-amino-acid chain: Putative integrase V10 (226 aa).

Active-site residues include Arg-97, His-174, and Arg-177. The O-(3'-phospho-DNA)-tyrosine intermediate role is filled by Tyr-210.

Belongs to the 'phage' integrase family.

In terms of biological role, may catalyze site-specific integration of viral genome into host or helper virus DNA. This chain is Putative integrase V10, found in Acanthamoeba polyphaga (Amoeba).